The chain runs to 189 residues: Probable nicotinate-nucleotide adenylyltransferase (189 aa).

Belongs to the NadD family.

The catalysed reaction is nicotinate beta-D-ribonucleotide + ATP + H(+) = deamido-NAD(+) + diphosphate. The protein operates within cofactor biosynthesis; NAD(+) biosynthesis; deamido-NAD(+) from nicotinate D-ribonucleotide: step 1/1. In terms of biological role, catalyzes the reversible adenylation of nicotinate mononucleotide (NaMN) to nicotinic acid adenine dinucleotide (NaAD). This Bacillus cereus (strain Q1) protein is Probable nicotinate-nucleotide adenylyltransferase.